The primary structure comprises 118 residues: Thioredoxin H5 (118 aa).

An N-acetylalanine modification is found at Ala-2. A Thioredoxin domain is found at 2-113 (AGEGEVIACH…INEKLMKHGG (112 aa)). Catalysis depends on nucleophile residues Cys-39 and Cys-42. A disulfide bridge connects residues Cys-39 and Cys-42.

It belongs to the thioredoxin family. Plant H-type subfamily. Interacts with MDH1.

It is found in the cytoplasm. Functionally, thiol-disulfide oxidoreductase involved in response to pathogens and oxidative stresses. Required for the response to victorin, a phytotoxin which induces programmed cell death in sensitive plants. Possesses insulin disulfide bonds reducing activity. The polypeptide is Thioredoxin H5 (TRX5) (Arabidopsis thaliana (Mouse-ear cress)).